A 689-amino-acid polypeptide reads, in one-letter code: DNA topoisomerase 1 (689 aa).

A Toprim domain is found at 3-113 (DNLVIVESPA…KENRVVFNEI (111 aa)). Glu-9 and Asp-82 together coordinate Mg(2+). The region spanning 129–557 (EMDLVDAQQA…FYNSFKQDVE (429 aa)) is the Topo IA-type catalytic domain. The tract at residues 163–168 (SAGRVQ) is interaction with DNA. Tyr-298 acts as the O-(5'-phospho-DNA)-tyrosine intermediate in catalysis. 3 C4-type zinc fingers span residues 577 to 603 (CEVC…FPDC), 617 to 645 (CPKC…YPEC), and 658 to 681 (CPKC…CSNC).

This sequence belongs to the type IA topoisomerase family. As to quaternary structure, monomer. The cofactor is Mg(2+).

It catalyses the reaction ATP-independent breakage of single-stranded DNA, followed by passage and rejoining.. In terms of biological role, releases the supercoiling and torsional tension of DNA, which is introduced during the DNA replication and transcription, by transiently cleaving and rejoining one strand of the DNA duplex. Introduces a single-strand break via transesterification at a target site in duplex DNA. The scissile phosphodiester is attacked by the catalytic tyrosine of the enzyme, resulting in the formation of a DNA-(5'-phosphotyrosyl)-enzyme intermediate and the expulsion of a 3'-OH DNA strand. The free DNA strand then undergoes passage around the unbroken strand, thus removing DNA supercoils. Finally, in the religation step, the DNA 3'-OH attacks the covalent intermediate to expel the active-site tyrosine and restore the DNA phosphodiester backbone. This is DNA topoisomerase 1 from Staphylococcus epidermidis (strain ATCC 35984 / DSM 28319 / BCRC 17069 / CCUG 31568 / BM 3577 / RP62A).